Reading from the N-terminus, the 687-residue chain is Glycine--tRNA ligase beta subunit (687 aa).

This sequence belongs to the class-II aminoacyl-tRNA synthetase family. In terms of assembly, tetramer of two alpha and two beta subunits.

Its subcellular location is the cytoplasm. It catalyses the reaction tRNA(Gly) + glycine + ATP = glycyl-tRNA(Gly) + AMP + diphosphate. The polypeptide is Glycine--tRNA ligase beta subunit (Neisseria gonorrhoeae (strain NCCP11945)).